Reading from the N-terminus, the 533-residue chain is Undecaprenyl phosphate-alpha-4-amino-4-deoxy-L-arabinose arabinosyl transferase (533 aa).

Transmembrane regions (helical) follow at residues 10-30 (LLLA…GLWI), 64-84 (PAGY…LFGV), 86-106 (IASA…AGKI), 113-133 (SFAS…AGYS), 137-157 (PQFT…VHSI), 170-190 (VACG…PAII), 207-227 (FGPL…LAVH), 257-277 (WWFY…LLPV), 290-310 (DTAF…LSKG), 312-332 (LPTY…DALV), 345-365 (VNGI…IYVQ), 377-397 (HLLL…LQGI), and 402-422 (FWAL…AALP).

The protein belongs to the glycosyltransferase 83 family.

The protein resides in the cell inner membrane. It catalyses the reaction 4-amino-4-deoxy-alpha-L-arabinopyranosyl di-trans,octa-cis-undecaprenyl phosphate + lipid IVA = lipid IIA + di-trans,octa-cis-undecaprenyl phosphate.. Its pathway is lipopolysaccharide metabolism; 4-amino-4-deoxy-beta-L-arabinose-lipid A biosynthesis. Its function is as follows. Catalyzes the transfer of the L-Ara4N moiety of the glycolipid undecaprenyl phosphate-alpha-L-Ara4N to lipid A. The modified arabinose is attached to lipid A and is required for resistance to polymyxin and cationic antimicrobial peptides. The sequence is that of Undecaprenyl phosphate-alpha-4-amino-4-deoxy-L-arabinose arabinosyl transferase from Pseudomonas savastanoi pv. phaseolicola (strain 1448A / Race 6) (Pseudomonas syringae pv. phaseolicola (strain 1448A / Race 6)).